A 662-amino-acid chain; its full sequence is DNA topoisomerase 4 subunit B (662 aa).

Residues Tyr-20, Asn-60, Asp-87, 129-135 (GLHGVGI), and Lys-359 contribute to the ATP site. The 115-residue stretch at 439 to 553 (TELFIVEGDS…EGHLYLAKPP (115 aa)) folds into the Toprim domain. Mg(2+) is bound by residues Glu-445, Asp-518, and Asp-520.

This sequence belongs to the type II topoisomerase family. ParE type 1 subfamily. Heterotetramer composed of ParC and ParE. Requires Mg(2+) as cofactor. The cofactor is Mn(2+). It depends on Ca(2+) as a cofactor.

It catalyses the reaction ATP-dependent breakage, passage and rejoining of double-stranded DNA.. In terms of biological role, topoisomerase IV is essential for chromosome segregation. It relaxes supercoiled DNA. Performs the decatenation events required during the replication of a circular DNA molecule. This chain is DNA topoisomerase 4 subunit B, found in Rickettsia prowazekii (strain Madrid E).